The chain runs to 129 residues: MARVKRAVNAQKKRRTILKASKGYRGQRSRLYRKAKEQQLHSLTYAYRDRRARKGEFRKLWIARINAAARANDITYNRFIQGLKIAGVEVDRKNLAELAVSDAAAFTALVEVAKAALPEDVNAPAGEAA.

Belongs to the bacterial ribosomal protein bL20 family.

Its function is as follows. Binds directly to 23S ribosomal RNA and is necessary for the in vitro assembly process of the 50S ribosomal subunit. It is not involved in the protein synthesizing functions of that subunit. In Mycobacteroides abscessus (strain ATCC 19977 / DSM 44196 / CCUG 20993 / CIP 104536 / JCM 13569 / NCTC 13031 / TMC 1543 / L948) (Mycobacterium abscessus), this protein is Large ribosomal subunit protein bL20.